The primary structure comprises 309 residues: Xylose/arabinose import permease protein XacI (309 aa).

6 helical membrane-spanning segments follow: residues 29-49 (LVVFFLGFFLVPLETGIMTAI), 89-109 (LIMSIPATIGSVLFGSMAAYG), 121-141 (MLMLFVVGVFVPYQAVLVPLA), 170-190 (ELVPLVITHIAYGIPICTILF), 227-247 (MFGVVFIYQFTQIYNEFLFAF), and 282-302 (AAFLAAVPTLILYVAFAEQFA). The 213-residue stretch at 85-297 (FFNSLIMSIP…VPTLILYVAF (213 aa)) folds into the ABC transmembrane type-1 domain.

This sequence belongs to the binding-protein-dependent transport system permease family. In terms of assembly, the complex is composed of two ATP-binding proteins (XacJ and XacK), two transmembrane proteins (XacH and XacI) and a solute-binding protein (XacG).

It localises to the cell membrane. Functionally, part of the ABC transporter complex XacGHIJK involved in the uptake of xylose and arabinose. Responsible for the translocation of the substrate across the membrane. This is Xylose/arabinose import permease protein XacI from Haloferax volcanii (strain ATCC 29605 / DSM 3757 / JCM 8879 / NBRC 14742 / NCIMB 2012 / VKM B-1768 / DS2) (Halobacterium volcanii).